The sequence spans 884 residues: Probable LRR receptor-like serine/threonine-protein kinase PAM74 (884 aa).

The first 23 residues, 1 to 23 (MDSPCWLLLLLLGAFAIIGCVQA), serve as a signal peptide directing secretion. Residues 24 to 510 (QDQQEFISLD…TEKNSKKKFP (487 aa)) lie on the Extracellular side of the membrane. N-linked (GlcNAc...) asparagine glycans are attached at residues Asn-143, Asn-182, Asn-200, Asn-256, Asn-289, Asn-400, Asn-403, Asn-417, Asn-433, Asn-444, Asn-465, and Asn-470. 3 LRR repeats span residues 412 to 433 (RVLS…AIQN), 436 to 457 (HLEK…FLAQ), and 460 to 480 (SLVI…QGLR). The chain crosses the membrane as a helical span at residues 511-531 (VVIVASVASVAIIVAVLVIIF). Topologically, residues 532 to 884 (VLSKKKSSTV…FDTELFPRAR (353 aa)) are cytoplasmic. Phosphothreonine is present on Thr-570. In terms of domain architecture, Protein kinase spans 579-852 (NNFQRVVGEG…QVANELKECL (274 aa)). ATP is bound by residues 585 to 593 (VGEGGFGVV) and Lys-607. A Phosphotyrosine modification is found at Tyr-652. Asp-704 (proton acceptor) is an active-site residue. Ser-738 carries the post-translational modification Phosphoserine. 2 positions are modified to phosphothreonine: Thr-739 and Thr-744. A Phosphotyrosine modification is found at Tyr-752.

This sequence belongs to the protein kinase superfamily. Ser/Thr protein kinase family. As to quaternary structure, binds to the ammonium transporter AMT1-1.

It is found in the membrane. The enzyme catalyses L-seryl-[protein] + ATP = O-phospho-L-seryl-[protein] + ADP + H(+). It carries out the reaction L-threonyl-[protein] + ATP = O-phospho-L-threonyl-[protein] + ADP + H(+). Functionally, required for accurate photosynthesis. The sequence is that of Probable LRR receptor-like serine/threonine-protein kinase PAM74 (PAM74) from Arabidopsis thaliana (Mouse-ear cress).